A 344-amino-acid chain; its full sequence is Uroporphyrinogen decarboxylase (344 aa).

Residues 23 to 27 (RQAGR), aspartate 73, tyrosine 149, threonine 204, and histidine 321 contribute to the substrate site.

The protein belongs to the uroporphyrinogen decarboxylase family. In terms of assembly, homodimer.

The protein localises to the cytoplasm. It catalyses the reaction uroporphyrinogen III + 4 H(+) = coproporphyrinogen III + 4 CO2. Its pathway is porphyrin-containing compound metabolism; protoporphyrin-IX biosynthesis; coproporphyrinogen-III from 5-aminolevulinate: step 4/4. Functionally, catalyzes the decarboxylation of four acetate groups of uroporphyrinogen-III to yield coproporphyrinogen-III. The sequence is that of Uroporphyrinogen decarboxylase from Francisella tularensis subsp. holarctica (strain LVS).